Here is a 239-residue protein sequence, read N- to C-terminus: Small ribosomal subunit protein uS3 (239 aa).

The 69-residue stretch at Arg-40 to Asn-108 folds into the KH type-2 domain. The tract at residues Lys-212–Glu-239 is disordered. Positions Ala-215–Pro-226 are enriched in basic and acidic residues. The span at Arg-227–Glu-239 shows a compositional bias: basic residues.

Belongs to the universal ribosomal protein uS3 family. In terms of assembly, part of the 30S ribosomal subunit. Forms a tight complex with proteins S10 and S14.

Its function is as follows. Binds the lower part of the 30S subunit head. Binds mRNA in the 70S ribosome, positioning it for translation. This chain is Small ribosomal subunit protein uS3 (rpsC), found in Thermus thermophilus (strain ATCC BAA-163 / DSM 7039 / HB27).